Reading from the N-terminus, the 338-residue chain is mRNA decay activator protein ZFP36L1 (338 aa).

The interval 1 to 111 (MTTTLVSATI…QKQPGGGQVN (111 aa)) is necessary and sufficient for the association with mRNA decay enzymes and mRNA decay activation. Position 54 is a phosphoserine; by MAPKAPK2 (Ser54). Position 90 is a phosphoserine; by PKB/AKT1 (Ser90). The residue at position 92 (Ser92) is a Phosphoserine; by PKB/AKT1 and MAPKAPK2. The interval 93–113 (EGGERLLPTQKQPGGGQVNSS) is disordered. 2 C3H1-type zinc fingers span residues 114–142 (RYKTELCRPFEENGACKYGDKCQFAHGIH) and 152–180 (KYKTELCRTFHTIGFCPYGPRCHFIHNAE). The tract at residues 185–338 (LAGARDLSAD…IFSRLSISDD (154 aa)) is necessary for mRNA decay activation. Ser203 is modified (phosphoserine; by PKB/AKT1 and MAPKAPK2). Residues 273–338 (SPTTFLFRPM…IFSRLSISDD (66 aa)) form a disordered region. A compositionally biased stretch (low complexity) spans 296 to 318 (QDSLSDQEGYLSSSSSSHSGSDS). Phosphoserine is present on Ser318. Ser334 is modified (phosphoserine; by RPS6KA1).

In terms of assembly, associates with the cytoplasmic CCR4-NOT deadenylase and RNA exosome complexes to trigger ARE-containing mRNA deadenylation and decay processes. Interacts with CNOT1. Interacts (via N-terminus) with CNOT6. Interacts with CNOT7; this interaction is inhibited in response to phorbol 12-myristate 13-acetate (PMA) treatment in a p38 MAPK-dependent manner. Interacts with DCP1A. Interacts (via N-terminus) with DCP2. Interacts (via N-terminus) with EXOSC2. Interacts with XRN1. Interacts (via phosphorylated form) with YWHAB; this interaction occurs in a protein kinase AKT1-dependent manner. Interacts (via phosphorylated form) with YWHAZ; this interaction occurs in a p38 MAPK- and AKT-signaling pathways. Phosphorylated. Phosphorylated by RPS6KA1 at Ser-334 upon phorbol 12-myristate 13-acetate (PMA) treatment; this phosphorylation results in dissociation of the CCR4-NOT deadenylase complex and induces p38 MAPK-mediated stabilization of the low-density lipoprotein receptor LDLR mRNA. Phosphorylated by protein kinase AKT1 at Ser-92 and Ser-203 in response to insulin; these phosphorylations stabilize ZFP36L1, increase the association with 14-3-3 proteins and mediate ARE-containing mRNA stabilization. AKT1-mediated phosphorylation at Ser-92 does not impair ARE-containing RNA-binding. Phosphorylated at Ser-54, Ser-92 and Ser-203 by MAPKAPK2; these phosphorylations increase the association with 14-3-3 proteins and mediate ARE-containing mRNA stabilization in a protein kinase AKT1-independent manner. MAPKAPK2-mediated phosphorylations at Ser-54, Ser-92 and Ser-203 do not impair ARE-containing RNA-binding. Phosphorylations increase the association with 14-3-3 proteins and mediate ARE-containing mRNA stabilization during early adipogenesis in a p38 MAPK- and AKT-dependent manner. Post-translationally, ubiquitinated. Ubiquitination leads to proteasomal degradation, a process inhibited by phosphorylations at Ser-90, Ser-92 and Ser-203. Expressed mainly in the basal epidermal layer, weakly in the suprabasal epidermal layers. Expressed in epidermal keratinocytes (at protein level). Expressed in osteoblasts.

It is found in the nucleus. It localises to the cytoplasm. Its subcellular location is the cytoplasmic granule. The protein localises to the P-body. Its function is as follows. Zinc-finger RNA-binding protein that destabilizes several cytoplasmic AU-rich element (ARE)-containing mRNA transcripts by promoting their poly(A) tail removal or deadenylation, and hence provide a mechanism for attenuating protein synthesis. Acts as a 3'-untranslated region (UTR) ARE mRNA-binding adapter protein to communicate signaling events to the mRNA decay machinery. Functions by recruiting the CCR4-NOT deadenylase complex and components of the cytoplasmic RNA decay machinery to the bound ARE-containing mRNAs, and hence promotes ARE-mediated mRNA deadenylation and decay processes. Also induces the degradation of ARE-containing mRNAs even in absence of poly(A) tail. Binds to 3'-UTR ARE of numerous mRNAs. Positively regulates early adipogenesis by promoting ARE-mediated mRNA decay of immediate early genes (IEGs). Promotes ARE-mediated mRNA decay of mineralocorticoid receptor NR3C2 mRNA in response to hypertonic stress. Negatively regulates hematopoietic/erythroid cell differentiation by promoting ARE-mediated mRNA decay of the transcription factor STAT5B mRNA. Positively regulates monocyte/macrophage cell differentiation by promoting ARE-mediated mRNA decay of the cyclin-dependent kinase CDK6 mRNA. Promotes degradation of ARE-containing pluripotency-associated mRNAs in embryonic stem cells (ESCs), such as NANOG, through a fibroblast growth factor (FGF)-induced MAPK-dependent signaling pathway, and hence attenuates ESC self-renewal and positively regulates mesendoderm differentiation. May play a role in mediating pro-apoptotic effects in malignant B-cells by promoting ARE-mediated mRNA decay of BCL2 mRNA. In association with ZFP36L2 maintains quiescence on developing B lymphocytes by promoting ARE-mediated decay of several mRNAs encoding cell cycle regulators that help B cells progress through the cell cycle, and hence ensuring accurate variable-diversity-joining (VDJ) recombination and functional immune cell formation. Together with ZFP36L2 is also necessary for thymocyte development and prevention of T-cell acute lymphoblastic leukemia (T-ALL) transformation by promoting ARE-mediated mRNA decay of the oncogenic transcription factor NOTCH1 mRNA. Participates in the delivery of target ARE-mRNAs to processing bodies (PBs). In addition to its cytosolic mRNA-decay function, plays a role in the regulation of nuclear mRNA 3'-end processing; modulates mRNA 3'-end maturation efficiency of the DLL4 mRNA through binding with an ARE embedded in a weak noncanonical polyadenylation (poly(A)) signal in endothelial cells. Also involved in the regulation of stress granule (SG) and P-body (PB) formation and fusion. Plays a role in vasculogenesis and endocardial development. Plays a role in the regulation of keratinocyte proliferation, differentiation and apoptosis. Plays a role in myoblast cell differentiation. The protein is mRNA decay activator protein ZFP36L1 of Homo sapiens (Human).